Here is a 640-residue protein sequence, read N- to C-terminus: 1,4-alpha-glucan branching enzyme GlgB (640 aa).

Asp-317 acts as the Nucleophile in catalysis. The Proton donor role is filled by Glu-370.

This sequence belongs to the glycosyl hydrolase 13 family. GlgB subfamily. As to quaternary structure, monomer.

The catalysed reaction is Transfers a segment of a (1-&gt;4)-alpha-D-glucan chain to a primary hydroxy group in a similar glucan chain.. It functions in the pathway glycan biosynthesis; glycogen biosynthesis. Its function is as follows. Catalyzes the formation of the alpha-1,6-glucosidic linkages in glycogen by scission of a 1,4-alpha-linked oligosaccharide from growing alpha-1,4-glucan chains and the subsequent attachment of the oligosaccharide to the alpha-1,6 position. This Nitratidesulfovibrio vulgaris (strain DP4) (Desulfovibrio vulgaris) protein is 1,4-alpha-glucan branching enzyme GlgB.